The sequence spans 69 residues: MLLYIVIIVACIISKLVPNEYWAIHLFFIIMIFMVYMYEKLDIHQKYQFWNYTMSGLSGHNVQITCKCY.

The Cytoplasmic portion of the chain corresponds to 1–15; that stretch reads MLLYIVIIVACIISK. A helical transmembrane segment spans residues 16–36; it reads LVPNEYWAIHLFFIIMIFMVY. At 37-69 the chain is on the extracellular side; the sequence is MYEKLDIHQKYQFWNYTMSGLSGHNVQITCKCY. Residue Asn-51 is glycosylated (N-linked (GlcNAc...) asparagine; by host).

Belongs to the asfivirus X69R family.

It localises to the host membrane. This is an uncharacterized protein from Ornithodoros (relapsing fever ticks).